The chain runs to 804 residues: Phenylalanine--tRNA ligase beta subunit (804 aa).

The region spanning D40–I155 is the tRNA-binding domain. One can recognise a B5 domain in the interval Q409–A484. Residues D462, D468, E471, and E472 each contribute to the Mg(2+) site. One can recognise an FDX-ACB domain in the interval P710–R803.

Belongs to the phenylalanyl-tRNA synthetase beta subunit family. Type 1 subfamily. As to quaternary structure, tetramer of two alpha and two beta subunits. The cofactor is Mg(2+).

It is found in the cytoplasm. The catalysed reaction is tRNA(Phe) + L-phenylalanine + ATP = L-phenylalanyl-tRNA(Phe) + AMP + diphosphate + H(+). This is Phenylalanine--tRNA ligase beta subunit from Geobacillus kaustophilus (strain HTA426).